The following is an 824-amino-acid chain: Protein bicaudal D homolog 2 (824 aa).

Residue serine 2 is modified to N-acetylserine. A coiled-coil region spans residues glutamate 20 to aspartate 269. Positions glutamate 25–arginine 398 are interacts with DYNLL1, DYNC1H1, DYNC1I2, DCTN1 and DCTN2. Serine 190, serine 224, and serine 318 each carry phosphoserine. The disordered stretch occupies residues leucine 311 to proline 330. Residue threonine 319 is modified to Phosphothreonine. The tract at residues serine 334 to aspartate 599 is interaction with KIF5A. Residues serine 338–leucine 537 adopt a coiled-coil conformation. 2 positions are modified to phosphoserine: serine 343 and serine 395. Disordered stretches follow at residues arginine 398 to tyrosine 425, glutamate 559 to arginine 622, and glutamate 804 to leucine 824. Residues alanine 402–glycine 422 show a composition bias toward basic and acidic residues. Serine 568, serine 574, and serine 582 each carry phosphoserine. The interaction with RANBP2 stretch occupies residues leucine 590–leucine 824. Threonine 602 is modified (phosphothreonine). Residues aspartate 604–serine 618 are compositionally biased toward low complexity. Residues aspartate 666–arginine 808 adopt a coiled-coil conformation. Positions aspartate 666–alanine 814 are interacts with RAB6A. The residue at position 821 (threonine 821) is a Phosphothreonine. Phosphoserine is present on serine 823.

Belongs to the BicD family. In terms of assembly, part of a tripartite complex with dynein and dynactin, acts an adapter linking the dynein motor complex and dynactin. Interacts with CPNE4 (via VWFA domain). Interacts with RAB6A. Interacts with NEK9. Interacts with DNAI1. Interacts with DYNC1H1. Interacts with RANBP2. Binds preferentially to tyrosinated microtubules than to detyrosinated microtubules. Interacts with DYNLL1, DYNC1I2; DCTN1, DCTN2 and KIF5A. Interacts with KIF1C. Phosphorylated by NEK9 in vitro. As to expression, ubiquitous.

Its subcellular location is the golgi apparatus. It is found in the cytoplasm. The protein resides in the cytoskeleton. It localises to the nucleus envelope. The protein localises to the nucleus. Its subcellular location is the nuclear pore complex. Acts as an adapter protein linking the dynein motor complex to various cargos and converts dynein from a non-processive to a highly processive motor in the presence of dynactin. Facilitates and stabilizes the interaction between dynein and dynactin and activates dynein processivity (the ability to move along a microtubule for a long distance without falling off the track). Facilitates the binding of RAB6A to the Golgi by stabilizing its GTP-bound form. Regulates coat complex coatomer protein I (COPI)-independent Golgi-endoplasmic reticulum transport via its interaction with RAB6A and recruitment of the dynein-dynactin motor complex. Contributes to nuclear and centrosomal positioning prior to mitotic entry through regulation of both dynein and kinesin-1. During G2 phase of the cell cycle, associates with RANBP2 at the nuclear pores and recruits dynein and dynactin to the nuclear envelope to ensure proper positioning of the nucleus relative to centrosomes prior to the onset of mitosis. In Homo sapiens (Human), this protein is Protein bicaudal D homolog 2.